The primary structure comprises 548 residues: Chaperonin GroEL (548 aa).

ATP is bound by residues 30–33 (TLGP), Lys51, 87–91 (DGTTT), Gly415, 479–481 (NAA), and Asp495.

The protein belongs to the chaperonin (HSP60) family. In terms of assembly, forms a cylinder of 14 subunits composed of two heptameric rings stacked back-to-back. Interacts with the co-chaperonin GroES. Post-translationally, UMPylated on a tyrosine residue by YdiU under ATP-limited conditions.

Its subcellular location is the cytoplasm. The enzyme catalyses ATP + H2O + a folded polypeptide = ADP + phosphate + an unfolded polypeptide.. Its activity is regulated as follows. UMPylation of the chaperone by YdiU negatively regulates its activity, facilitating Salmonella survival under ATP-limited conditions. Together with its co-chaperonin GroES, plays an essential role in assisting protein folding. The GroEL-GroES system forms a nano-cage that allows encapsulation of the non-native substrate proteins and provides a physical environment optimized to promote and accelerate protein folding. In Salmonella typhimurium (strain LT2 / SGSC1412 / ATCC 700720), this protein is Chaperonin GroEL.